The primary structure comprises 179 residues: MDAKVYVGGLPSDATSQELEEIFDRFGRIRKVWVARRPPGFAFVEYDDVRDAEDAVRALDGSRICGVRARVELSTGQRRGGGGRGGGFGGRGGGGRDRSPYRGDRGRSRSRSRDRGRDRSRDRSRDRSRDRSRDRSRERSRERERTRSRSRSPQERDRSHSKSRSRSRSRSRSRSASPH.

An RRM domain is found at 3–76 (AKVYVGGLPS…VRARVELSTG (74 aa)). The segment at 75–179 (TGQRRGGGGR…RSRSRSASPH (105 aa)) is disordered. Residues 78–93 (RRGGGGRGGGFGGRGG) show a composition bias toward gly residues. Residues 94–160 (GGRDRSPYRG…RSPQERDRSH (67 aa)) are compositionally biased toward basic and acidic residues. The segment covering 161–173 (SKSRSRSRSRSRS) has biased composition (basic residues).

It belongs to the splicing factor SR family. Post-translationally, extensively phosphorylated on serine residues in the RS domain.

Its subcellular location is the nucleus. Plays a functionally redundant role in shifting germ cell sexual differentiation in hermaprodites. Required for the development of somatic gonad structures and for progression from larval stage to adulthood. The sequence is that of Probable splicing factor, arginine/serine-rich 6 (rsp-6) from Caenorhabditis elegans.